The following is a 92-amino-acid chain: UPF0335 protein BMEI0289 (92 aa).

This sequence belongs to the UPF0335 family.

In Brucella melitensis biotype 1 (strain ATCC 23456 / CCUG 17765 / NCTC 10094 / 16M), this protein is UPF0335 protein BMEI0289.